A 230-amino-acid chain; its full sequence is DNA mismatch repair protein MutH (230 aa).

This sequence belongs to the MutH family.

The protein resides in the cytoplasm. Sequence-specific endonuclease that cleaves unmethylated GATC sequences. It is involved in DNA mismatch repair. The chain is DNA mismatch repair protein MutH from Citrobacter koseri (strain ATCC BAA-895 / CDC 4225-83 / SGSC4696).